The chain runs to 609 residues: MFS siderochrome iron transporter 1 (609 aa).

Basic and acidic residues-rich tracts occupy residues 1 to 17 and 25 to 34; these read MSAL…EDNT and PHEKEIHETP. The disordered stretch occupies residues 1–69; that stretch reads MSALTKIREG…NDSDVPSEDV (69 aa). A run of 14 helical transmembrane segments spans residues 81–101, 125–145, 154–174, 182–202, 220–240, 245–265, 300–320, 329–349, 368–390, 407–427, 432–452, 469–489, 496–516, and 573–593; these read LTWG…LFLI, LMTT…IPMA, AEGF…MAVS, AAQV…GVLA, SPYM…VIDV, WGFG…FLVL, VIGI…FNLA, TGYI…FGVW, SVVA…NYFF, YVNS…GFLI, FYKW…GLMI, IFIS…VLAA, AAAL…GGAI, and IRML…VPML.

Belongs to the major facilitator superfamily.

Its subcellular location is the cell membrane. Functionally, major facilitator transporter involved in extracellular siderophore uptake. Gibberella zeae produces extracellular coprogen-type siderophores as well as the intracellular siderophore ferricrocin. The role of extracellular siderophores is to supply iron to the fungus during plant infection, and the intracellular ferricrocin is required for intracellular iron distribution and storage with a crucial role in ascus and ascospore development. The protein is MFS siderochrome iron transporter 1 of Gibberella zeae (strain ATCC MYA-4620 / CBS 123657 / FGSC 9075 / NRRL 31084 / PH-1) (Wheat head blight fungus).